A 191-amino-acid chain; its full sequence is dCTP deaminase (191 aa).

DCTP contacts are provided by residues 112–117, 136–138, Q157, Y173, and Q183; these read KSTYAR and TLE. The Proton donor/acceptor role is filled by E138.

The protein belongs to the dCTP deaminase family. Homotrimer.

The catalysed reaction is dCTP + H2O + H(+) = dUTP + NH4(+). It functions in the pathway pyrimidine metabolism; dUMP biosynthesis; dUMP from dCTP (dUTP route): step 1/2. Catalyzes the deamination of dCTP to dUTP. This is dCTP deaminase from Psychrobacter arcticus (strain DSM 17307 / VKM B-2377 / 273-4).